The primary structure comprises 177 residues: Embryogenesis-like protein (177 aa).

Positions 98–118 (VDEINLKFAEAREEIEMAMDA) form a coiled coil.

In terms of assembly, interacts with HAG1/GCN5. As to expression, expressed in flowers, leaves, stems and siliques.

The protein localises to the nucleus. Functionally, activates gene expression by recruiting HAG1/GCN5 and triggering subsequent histone H3 acetylation of target genes promoters. This is Embryogenesis-like protein from Arabidopsis thaliana (Mouse-ear cress).